Consider the following 779-residue polypeptide: Probable ATP-dependent RNA helicase DHX40 (779 aa).

The interval 1-28 (MSRFPAVAGRAPRRQEEGERSRDLQEER) is disordered. Positions 13 to 28 (RRQEEGERSRDLQEER) are enriched in basic and acidic residues. The Helicase ATP-binding domain occupies 63–231 (IQAVRDNSFL…FGNCPIFDIP (169 aa)). Residue 76–83 (GNTGSGKT) coordinates ATP. The DEAH box signature appears at 173–176 (DEAH). In terms of domain architecture, Helicase C-terminal spans 263 to 442 (TMDIHLNEMA…SVVLTLKCLA (180 aa)). The interval 737-779 (SKDVLKKMQRRNDDKSISDARARFLERKQQRTQDHSDTRKETG) is disordered.

It belongs to the DEAD box helicase family. DEAH subfamily. In terms of tissue distribution, ubiquitously expressed.

It catalyses the reaction ATP + H2O = ADP + phosphate + H(+). In terms of biological role, probable ATP-dependent RNA helicase. The sequence is that of Probable ATP-dependent RNA helicase DHX40 (DHX40) from Homo sapiens (Human).